The chain runs to 878 residues: Alanine--tRNA ligase (878 aa).

Positions 558, 562, 663, and 667 each coordinate Zn(2+).

This sequence belongs to the class-II aminoacyl-tRNA synthetase family. It depends on Zn(2+) as a cofactor.

The protein localises to the cytoplasm. The enzyme catalyses tRNA(Ala) + L-alanine + ATP = L-alanyl-tRNA(Ala) + AMP + diphosphate. In terms of biological role, catalyzes the attachment of alanine to tRNA(Ala) in a two-step reaction: alanine is first activated by ATP to form Ala-AMP and then transferred to the acceptor end of tRNA(Ala). Also edits incorrectly charged Ser-tRNA(Ala) and Gly-tRNA(Ala) via its editing domain. This Mycoplasmopsis synoviae (strain 53) (Mycoplasma synoviae) protein is Alanine--tRNA ligase.